Reading from the N-terminus, the 137-residue chain is Cytochrome b5 (137 aa).

Residues 6–82 (KKVYTLEEVA…MDEYYVGDID (77 aa)) enclose the Cytochrome b5 heme-binding domain. Heme is bound by residues H41 and H65. Residues 108 to 128 (FIIKILQFLVPLAILGLAVAI) form a helical membrane-spanning segment.

Belongs to the cytochrome b5 family.

The protein resides in the endoplasmic reticulum membrane. It localises to the microsome membrane. Membrane bound hemoprotein which function as an electron carrier for several membrane bound oxygenases. This is Cytochrome b5 from Oryza sativa subsp. japonica (Rice).